The primary structure comprises 649 residues: MDVKTYPVLEAAKNRTLVDNATYLKWYEESVADPEKFWGEHGKRIEWFEPYTTVKNTSFDGNVSIKWFEDGLTNVSYNCIDRHLKTHGEKTAIIWEGDNPYIDKRITYNELYDKVCRLANVLKKHGVEKGDRVTIYMPMVPEAAYAMLACARIGAIHSVVFGGFSPEALAGRIVDCESTFVITCDEGLRGGKPVPLKENTEKAIDIAARQHVMVNKVLVVRRTGGKVPWAPGRDVWYHQEIATVEPHCPPEKMRAEDPLFILYTSGSTGKPKGVLHTTGGYLVYASMTHQYVFDYHDGDIYWCTADVGWVTGHSYIVYGPLANAATTLMFEGVPNFPDAGRFWEVIDKHKVNIFYTAPTAIRSLMGAGDDFVNRSSRSSLRLLGTVGEPINPEAWEWYYHVVGAERSPIVDTWWQTETGGILITPLPGATDLKPGSATRPFFGVKPQIVDNEGNVIDGPADGNLCITDSWPGQMRTVYGDHERFIQTYFSTYKGKYFTGDGCRRDEDGYYWITGRVDDVLNVSGHRLGTAEVESALVSHHLVSEAAVVGYPHPIKGQGIYCYVSLMAGEVGSDELRQELVKHVRSEIGPIATPDKIQFAPGLPKTRSGKIMRRILRKIAEDDFGSLGDTSTLADPAVVDDLIANRQNRG.

CoA is bound by residues 189–192 (RGGK), Thr311, and Asn335. Residues 387–389 (GEP), 411–416 (DTWWQT), Asp500, and Arg515 contribute to the ATP site. Ser523 serves as a coordination point for CoA. Arg526 serves as a coordination point for ATP. Mg(2+) contacts are provided by Val537, His539, and Val542. CoA is bound at residue Arg584. Lys609 is subject to N6-acetyllysine.

The protein belongs to the ATP-dependent AMP-binding enzyme family. The cofactor is Mg(2+). In terms of processing, acetylated. Deacetylation by the SIR2-homolog deacetylase activates the enzyme.

It carries out the reaction acetate + ATP + CoA = acetyl-CoA + AMP + diphosphate. Its function is as follows. Catalyzes the conversion of acetate into acetyl-CoA (AcCoA), an essential intermediate at the junction of anabolic and catabolic pathways. AcsA undergoes a two-step reaction. In the first half reaction, AcsA combines acetate with ATP to form acetyl-adenylate (AcAMP) intermediate. In the second half reaction, it can then transfer the acetyl group from AcAMP to the sulfhydryl group of CoA, forming the product AcCoA. The polypeptide is Acetyl-coenzyme A synthetase (Sinorhizobium fredii (strain NBRC 101917 / NGR234)).